A 233-amino-acid chain; its full sequence is Large ribosomal subunit protein uL1 (233 aa).

It belongs to the universal ribosomal protein uL1 family. As to quaternary structure, part of the 50S ribosomal subunit.

In terms of biological role, binds directly to 23S rRNA. The L1 stalk is quite mobile in the ribosome, and is involved in E site tRNA release. Its function is as follows. Protein L1 is also a translational repressor protein, it controls the translation of the L11 operon by binding to its mRNA. This Psychrobacter arcticus (strain DSM 17307 / VKM B-2377 / 273-4) protein is Large ribosomal subunit protein uL1.